The sequence spans 156 residues: Lipoprotein signal peptidase (156 aa).

Helical transmembrane passes span 52 to 72 (ILEGQMWLFYIITSIVVIGIV) and 85 to 105 (FATALALILGGAIGNFIDRIF). Catalysis depends on residues Asp111 and Asp129. The chain crosses the membrane as a helical span at residues 121 to 141 (NFPIFNVADSALCVGVGILFL).

The protein belongs to the peptidase A8 family.

The protein localises to the cell membrane. It carries out the reaction Release of signal peptides from bacterial membrane prolipoproteins. Hydrolyzes -Xaa-Yaa-Zaa-|-(S,diacylglyceryl)Cys-, in which Xaa is hydrophobic (preferably Leu), and Yaa (Ala or Ser) and Zaa (Gly or Ala) have small, neutral side chains.. It participates in protein modification; lipoprotein biosynthesis (signal peptide cleavage). Functionally, this protein specifically catalyzes the removal of signal peptides from prolipoproteins. This Halalkalibacterium halodurans (strain ATCC BAA-125 / DSM 18197 / FERM 7344 / JCM 9153 / C-125) (Bacillus halodurans) protein is Lipoprotein signal peptidase.